The following is a 724-amino-acid chain: Solute carrier organic anion transporter family member 4C1 (724 aa).

The Cytoplasmic segment spans residues 1 to 105; that stretch reads MKSAKGIENL…QCLQRCNTPG (105 aa). S15, S16, S24, S26, and S28 each carry phosphoserine. Positions 24–71 are disordered; it reads SASPSQVEVSALSSDPQRENSQPQELQKPQEPQKSPEPSLPSAPPNVS. Residues 25-38 are compositionally biased toward polar residues; the sequence is ASPSQVEVSALSSD. Over residues 44 to 60 the composition is skewed to low complexity; it reads SQPQELQKPQEPQKSPE. Residues 106 to 126 form a helical membrane-spanning segment; the sequence is GFLLHYCLLAVTQGIVVNGLV. The Extracellular portion of the chain corresponds to 127 to 145; sequence NISISTIEKRYEMKSSLTG. Residues 146 to 166 form a helical membrane-spanning segment; the sequence is LISSSYDISFCLLSLFVSFFG. The Cytoplasmic portion of the chain corresponds to 167 to 172; that stretch reads ERGHKP. A helical transmembrane segment spans residues 173-197; it reads RWLAFAAFMIGLGALVFSLPQFFSG. Topologically, residues 198-224 are extracellular; sequence EYKLGSLFEDTCVTTRNSTSCTSSTSS. The helical transmembrane segment at 225 to 254 threads the bilayer; the sequence is LSNYLYVFILGQLLLGAGGTPLYTLGTAFL. Over 255 to 274 the chain is Cytoplasmic; the sequence is DDSVPTHKSSLYIGTGYAMS. A helical membrane pass occupies residues 275–295; sequence ILGPAIGYVLGGQLLTIYVDV. Topologically, residues 296 to 311 are extracellular; the sequence is AMGESTDITEDDPRWL. The chain crosses the membrane as a helical span at residues 312–336; the sequence is GAWWIGFLLSWIFAWSLIIPFSCFP. The Cytoplasmic portion of the chain corresponds to 337–377; that stretch reads KHLPGTAEIQAGKTSQAHQSNSNADAKFGKSIKDFPAALKN. Residues 378–399 form a helical membrane-spanning segment; the sequence is LMKNAVFMCLVLSTSSEALITT. Residues 400 to 419 are Extracellular-facing; the sequence is GFATFLPKFIENQFGLTSSF. A helical transmembrane segment spans residues 420–443; the sequence is AATLGGAVLIPGAALGQILGGFLV. Residues 444–447 lie on the Cytoplasmic side of the membrane; it reads SKFK. The helical transmembrane segment at 448–471 threads the bilayer; it reads MTCKNTMKFALFTSGVALTLSFVF. Residues 472–580 lie on the Extracellular side of the membrane; it reads IYAKCGNEPF…ETHCAKLPIF (109 aa). The region spanning 495 to 549 is the Kazal-like domain; sequence GNLIAPCNANCNCLRSYYYPVCGDGVQYFSPCFAGCSNSVAHRKPKVYYNCSCIE. Disulfide bonds link C501-C530, C507-C526, and C516-C547. Residues 581 to 603 traverse the membrane as a helical segment; that stretch reads LCIFFIVIIFTFMAGTPITVSIL. The Cytoplasmic segment spans residues 604-612; that stretch reads RCVNHRQRS. A helical transmembrane segment spans residues 613–638; that stretch reads LALGIQFMVLRLLGTIPGPIIFGFTI. Topologically, residues 639–672 are extracellular; the sequence is DSTCILWDINDCGIKGACRIYDNIKMAHMLVAIS. The helical transmembrane segment at 673 to 690 threads the bilayer; sequence VTCKVITMFFNGFAIFLY. The Cytoplasmic portion of the chain corresponds to 691–724; the sequence is KPPPSATDLSFHKENAVVTNVLAEQDLNKIVKEG.

It belongs to the organo anion transporter (TC 2.A.60) family.

It localises to the basolateral cell membrane. It catalyses the reaction estrone 3-sulfate(out) = estrone 3-sulfate(in). It carries out the reaction L-thyroxine(out) = L-thyroxine(in). The enzyme catalyses 3,3',5-triiodo-L-thyronine(out) = 3,3',5-triiodo-L-thyronine(in). The catalysed reaction is chenodeoxycholate(out) = chenodeoxycholate(in). It catalyses the reaction glycocholate(out) = glycocholate(in). It carries out the reaction L-homoarginine(in) = L-homoarginine(out). The enzyme catalyses L-arginine(in) = L-arginine(out). The catalysed reaction is N(omega),N(omega)-dimethyl-L-arginine(out) = N(omega),N(omega)-dimethyl-L-arginine(in). Mediates the transport of organic anions such as steroids (estrone 3-sulfate, chenodeoxycholate, glycocholate) and thyroid hormones (3,3',5-triiodo-L-thyronine (T3), L-thyroxine (T4)), in the kidney. Capable of transporting cAMP and pharmacological substances such as digoxin, ouabain and methotrexate. Transport is independent of sodium, chloride ion, and ATP. Transport activity is stimulated by an acidic extracellular environment due to increased substrate affinity to the transporter. The driving force for this transport activity is currently not known. The role of hydrogencarbonate (HCO3(-), bicarbonate) as the probable counteranion that exchanges for organic anions is still not well defined. Functions as an uptake transporter at the apical membrane, suggesting a role in renal reabsorption. Involved in the renal secretion of the uremic toxin ADMA (N(omega),N(omega)-dimethyl-L-arginine or asymmetrical dimethylarginine), which is associated to cardiovascular events and mortality, and the structurally related amino acids L-arginine and L-homoarginine (a cardioprotective biomarker). Can act bidirectionally, suggesting a dual protective role of this transport protein; exporting L-homoarginine after being synthesized in proximal tubule cells, and mediating uptake of ADMA from the blood into proximal tubule cells where it is degraded by the enzyme dimethylarginine dimethylaminohydrolase 1 (DDAH1). May be involved in sperm maturation by enabling directed movement of organic anions and compounds within or between cells. This ion-transporting process is important to maintain the strict epididymal homeostasis necessary for sperm maturation. May have a role in secretory functions since seminal vesicle epithelial cells are assumed to secrete proteins involved in decapacitation by modifying surface proteins to facilitate the acquisition of the ability to fertilize the egg. In Pongo abelii (Sumatran orangutan), this protein is Solute carrier organic anion transporter family member 4C1.